The sequence spans 137 residues: MVVIRLARGGSKKNPFYHIVVADRRKPRDGRFIERVGYYNPMARGQDIRLQLEKERISHWLNQGAQTSLRVKHLIKKLEKSPEEAQKGGMRKGEFKRLQAEQAAKAQKKAVATEEPKAEEAKEAPPAESQAAEGKEE.

Basic and acidic residues-rich tracts occupy residues 80–99 and 111–125; these read KSPEEAQKGGMRKGEFKRLQ and VATEEPKAEEAKEAP. The tract at residues 80 to 137 is disordered; sequence KSPEEAQKGGMRKGEFKRLQAEQAAKAQKKAVATEEPKAEEAKEAPPAESQAAEGKEE. Over residues 126-137 the composition is skewed to low complexity; the sequence is PAESQAAEGKEE.

Belongs to the bacterial ribosomal protein bS16 family.

The polypeptide is Small ribosomal subunit protein bS16 (Coxiella burnetii (strain Dugway 5J108-111)).